Reading from the N-terminus, the 269-residue chain is Eukaryotic translation initiation factor 3 subunit G-1 (269 aa).

One can recognise an RRM domain in the interval 188–266; that stretch reads AAIRISNLSE…LILSVEWSKP (79 aa).

It belongs to the eIF-3 subunit G family. Component of the eukaryotic translation initiation factor 3 (eIF-3) complex. The eIF-3 complex interacts with pix.

The protein resides in the cytoplasm. Its function is as follows. RNA-binding component of the eukaryotic translation initiation factor 3 (eIF-3) complex, which is involved in protein synthesis of a specialized repertoire of mRNAs and, together with other initiation factors, stimulates binding of mRNA and methionyl-tRNAi to the 40S ribosome. The eIF-3 complex specifically targets and initiates translation of a subset of mRNAs involved in cell proliferation. This subunit can bind 18S rRNA. The protein is Eukaryotic translation initiation factor 3 subunit G-1 of Drosophila mojavensis (Fruit fly).